The sequence spans 427 residues: Gamma-glutamyl phosphate reductase (427 aa).

Belongs to the gamma-glutamyl phosphate reductase family.

The protein localises to the cytoplasm. It catalyses the reaction L-glutamate 5-semialdehyde + phosphate + NADP(+) = L-glutamyl 5-phosphate + NADPH + H(+). It functions in the pathway amino-acid biosynthesis; L-proline biosynthesis; L-glutamate 5-semialdehyde from L-glutamate: step 2/2. Functionally, catalyzes the NADPH-dependent reduction of L-glutamate 5-phosphate into L-glutamate 5-semialdehyde and phosphate. The product spontaneously undergoes cyclization to form 1-pyrroline-5-carboxylate. In Brucella melitensis biotype 2 (strain ATCC 23457), this protein is Gamma-glutamyl phosphate reductase.